Reading from the N-terminus, the 412-residue chain is Zinc finger protein 821 (412 aa).

A disordered region spans residues 26–83; sequence RQAMMKTDFPGDLGSQRQAIQQLRDQDSSSSDSEGDEEETTQDEVSSHTSEEDGGVVK. Residues 58-67 are compositionally biased toward acidic residues; the sequence is SEGDEEETTQ. 2 C2H2-type zinc fingers span residues 116–140 and 150–172; these read GLCQ…VYQH and YMCP…LLIH. Residues 257 to 366 adopt a coiled-coil conformation; it reads KWALRRQNEP…EKMDMMLRAQ (110 aa). The segment at 278–319 is disordered; that stretch reads RTAKKSRRDNETPEEREVRRMRDREAKRLQRMQETDEQRARR.

It belongs to the krueppel C2H2-type zinc-finger protein family.

The protein resides in the nucleus. In terms of biological role, may be involved in transcriptional regulation. This is Zinc finger protein 821 (ZNF821) from Bos taurus (Bovine).